Reading from the N-terminus, the 161-residue chain is Large ribosomal subunit protein uL16 (161 aa).

The disordered stretch occupies residues 140 to 161 (LNKGNYKPAKTPVTADDSESSS).

This sequence belongs to the universal ribosomal protein uL16 family. Part of the 50S ribosomal subunit.

Functionally, binds 23S rRNA and is also seen to make contacts with the A and possibly P site tRNAs. In Prochlorococcus marinus (strain NATL2A), this protein is Large ribosomal subunit protein uL16.